Consider the following 362-residue polypeptide: MNAVTAGAHALRHDWTLAEVQALFALPFNDLLFQAQTVHRAHFDPNEVQVSTLLSIKTGACPEDCKYCPQSARYHTGLEAERLMEVEKVLERAREAKANGSSRFCMGAAWRNPKEKDMPYILRMIEEVRGLGMETCMTLGMLTADQAARLGAAGLDYYNHNLDTSPEFYGDIITTRTYQDRLDTLAYVRGAGMKVCSGGIVGMGEQAKDRAGLLMALANLPRHPESVPINMLVKVKGTPLENQENLDPFEFIRTIAVARIMMPASHVRLSAGREKMNEQMQAMCFMAGANSIFYGCKLLTTPNPDENSDMQLFKRLGIRPAQRAQKPDQVQEEELLAEVSRQSEPAEMFYDATRPRAGAARS.

In terms of domain architecture, Radical SAM core spans N46–R273. [4Fe-4S] cluster contacts are provided by C61, C65, and C68. Residues C105, C136, C196, and R268 each coordinate [2Fe-2S] cluster. The segment at P320 to V339 is disordered.

This sequence belongs to the radical SAM superfamily. Biotin synthase family. As to quaternary structure, homodimer. [4Fe-4S] cluster is required as a cofactor. It depends on [2Fe-2S] cluster as a cofactor.

It carries out the reaction (4R,5S)-dethiobiotin + (sulfur carrier)-SH + 2 reduced [2Fe-2S]-[ferredoxin] + 2 S-adenosyl-L-methionine = (sulfur carrier)-H + biotin + 2 5'-deoxyadenosine + 2 L-methionine + 2 oxidized [2Fe-2S]-[ferredoxin]. It functions in the pathway cofactor biosynthesis; biotin biosynthesis; biotin from 7,8-diaminononanoate: step 2/2. Functionally, catalyzes the conversion of dethiobiotin (DTB) to biotin by the insertion of a sulfur atom into dethiobiotin via a radical-based mechanism. In Aeromonas hydrophila subsp. hydrophila (strain ATCC 7966 / DSM 30187 / BCRC 13018 / CCUG 14551 / JCM 1027 / KCTC 2358 / NCIMB 9240 / NCTC 8049), this protein is Biotin synthase.